A 168-amino-acid polypeptide reads, in one-letter code: Photosystem I assembly protein Ycf3 (168 aa).

TPR repeat units lie at residues 35–68 (AFTY…EIDP), 72–105 (SYIL…NPFL), and 120–153 (GEQA…TPGN).

It belongs to the Ycf3 family.

Its subcellular location is the plastid. It localises to the chloroplast thylakoid membrane. Its function is as follows. Essential for the assembly of the photosystem I (PSI) complex. May act as a chaperone-like factor to guide the assembly of the PSI subunits. The sequence is that of Photosystem I assembly protein Ycf3 from Nicotiana sylvestris (Wood tobacco).